Reading from the N-terminus, the 146-residue chain is Hemoglobin subunit beta (146 aa).

The Globin domain maps to 2-146 (FLTAEEKGLV…VANALAHKYH (145 aa)). Ser44 carries the post-translational modification Phosphoserine. Position 59 is an N6-acetyllysine (Lys59). His63 provides a ligand contact to heme b. Lys82 is modified (N6-acetyllysine). His92 provides a ligand contact to heme b. Cys93 bears the S-nitrosocysteine mark. Lys144 carries the N6-acetyllysine modification.

This sequence belongs to the globin family. Heterotetramer of two alpha chains and two beta chains. As to expression, red blood cells.

Functionally, involved in oxygen transport from the lung to the various peripheral tissues. This Lynx lynx (Eurasian lynx) protein is Hemoglobin subunit beta (HBB).